Consider the following 481-residue polypeptide: Protein NRT1/ PTR FAMILY 1.3 (481 aa).

A run of 12 helical transmembrane segments spans residues 32–52 (LAYF…YGMG), 57–77 (ANIL…GAFI), 88–108 (IGFG…TTII), 124–144 (LLKS…AGGV), 173–193 (FNWY…LLVF), 202–222 (IGFG…FAAS), 259–279 (IWST…FIVL), 302–322 (IFLV…IVPL), 333–353 (LGVM…ISAL), 374–394 (AMWL…NTIA), 422–442 (ASLI…GSWI), and 451–471 (LDYY…YFVW).

The protein belongs to the major facilitator superfamily. Proton-dependent oligopeptide transporter (POT/PTR) (TC 2.A.17) family. As to expression, expressed in roots.

Its subcellular location is the membrane. This chain is Protein NRT1/ PTR FAMILY 1.3 (NPF1.3), found in Arabidopsis thaliana (Mouse-ear cress).